The primary structure comprises 198 residues: Peptidyl-tRNA hydrolase (198 aa).

Tyrosine 18 is a binding site for tRNA. Residue histidine 23 is the Proton acceptor of the active site. TRNA-binding residues include tyrosine 69, asparagine 71, and asparagine 117.

Belongs to the PTH family. In terms of assembly, monomer.

It is found in the cytoplasm. It catalyses the reaction an N-acyl-L-alpha-aminoacyl-tRNA + H2O = an N-acyl-L-amino acid + a tRNA + H(+). In terms of biological role, hydrolyzes ribosome-free peptidyl-tRNAs (with 1 or more amino acids incorporated), which drop off the ribosome during protein synthesis, or as a result of ribosome stalling. Catalyzes the release of premature peptidyl moieties from peptidyl-tRNA molecules trapped in stalled 50S ribosomal subunits, and thus maintains levels of free tRNAs and 50S ribosomes. The chain is Peptidyl-tRNA hydrolase from Aeromonas hydrophila subsp. hydrophila (strain ATCC 7966 / DSM 30187 / BCRC 13018 / CCUG 14551 / JCM 1027 / KCTC 2358 / NCIMB 9240 / NCTC 8049).